The following is a 173-amino-acid chain: uncharacterized protein (173 aa).

A compositionally biased stretch (basic and acidic residues) spans 1–11; that stretch reads MLCAKNKKDPK. The tract at residues 1–173 is disordered; the sequence is MLCAKNKKDP…EKMEKSEKAY (173 aa). Positions 17 to 41 are enriched in polar residues; the sequence is FSETSKVQNVQNTQPKPAAPSQMSI. Basic and acidic residues-rich tracts occupy residues 56-109 and 120-144; these read KSVE…KADN and AKKE…EAKK. A compositionally biased stretch (basic residues) spans 145–156; it reads KESRRQKKMRNK. The segment covering 157 to 173 has biased composition (basic and acidic residues); sequence NSKEGSVEKMEKSEKAY.

This is an uncharacterized protein from Caenorhabditis elegans.